Here is a 643-residue protein sequence, read N- to C-terminus: Carboxy-terminal kinesin 2 (643 aa).

2 disordered regions span residues 1–42 and 81–101; these read MDST…SSLE and MRPK…KTKV. The segment at 1–116 is globular; the sequence is MDSTDKKVQV…QPAAIGAEKK (116 aa). Polar residues predominate over residues 88 to 101; that stretch reads PGITSTSFSGKTKV. Residues 117–296 are a coiled coil; the sequence is KRAAWDLKGQ…LVQELKGNIR (180 aa). Residues 294 to 633 form the Kinesin motor domain; it reads NIRVFCRVRP…LRFASKVNEC (340 aa). 386–393 lines the ATP pocket; sequence GQTGSGKT.

This sequence belongs to the TRAFAC class myosin-kinesin ATPase superfamily. Kinesin family. NCD subfamily.

It localises to the cytoplasm. The protein resides in the cytoskeleton. In terms of biological role, promotes mitotic spindle assembly. In Xenopus laevis (African clawed frog), this protein is Carboxy-terminal kinesin 2.